The primary structure comprises 556 residues: Delta-1-pyrroline-5-carboxylate dehydrogenase 12A1, mitochondrial (556 aa).

282-287 is a binding site for NAD(+); that stretch reads GSSRVA. Residue Glu-301 is the Proton acceptor of the active site. Catalysis depends on Cys-336, which acts as the Nucleophile.

Belongs to the aldehyde dehydrogenase family. In terms of tissue distribution, highly expressed in flowers. Constitutively expressed at low levels in the other tissues. Highly expressed in pollen grains and tissues undergoing cell death. Expressed in old leaves, mature siliques and developing embryos.

It is found in the mitochondrion matrix. The enzyme catalyses (S)-1-pyrroline-5-carboxylate + NAD(+) + 2 H2O = L-glutamate + NADH + H(+). Its pathway is amino-acid degradation; L-proline degradation into L-glutamate; L-glutamate from L-proline: step 2/2. Functionally, plays a role in the inhibition of programmed cell death by converting the toxic proline catabolism intermediate (s)-1-pyrroline-5-carboxylate (P5C) to glutamate. This chain is Delta-1-pyrroline-5-carboxylate dehydrogenase 12A1, mitochondrial, found in Arabidopsis thaliana (Mouse-ear cress).